Consider the following 576-residue polypeptide: MPVAATNSETAMQQVLDNLGSLPSATGAAELDLIFLRGIMESPIVRSLAKVIMVLWFMQQNVFVPMKYMLKYFGAHERLEETKLEAVRDNNLELVQEILRDLAHVAEQSSTAAELAHILQEPHFQSLLETHDSVASKTYETPPPSPGLDPTFSNQPVPPDAVRMVGIRKTAGEHLGVTFRVEGGELVIARILHGGMVAQQGLLHVGDIIKEVNGQPVGSDPRALQELLRNASGSVILKILPSYQEPHLPRQVFVKCHFDYDPARDSLIPCKEAGLRFNAGDLLQIVNQDDANWWQACHVEGGSAGLIPSQLLEEKRKAFVKRDLELTPNSGTLCGSLSGKKKKRMMYLTTKNAEFDRHELLIYEEVARMPPFRRKTLVLIGAQGVGRRSLKNKLIMWDPDRYGTTVPYTSRRPKDSEREGQGYSFVSRGEMEADVRAGRYLEHGEYEGNLYGTRIDSIRGVVAAGKVCVLDVNPQAVKVLRTAEFVPYVVFIEAPDFETLRAMNRAALESGISTKQLTEADLRRTVEESSRIQRGYGHYFDLCLVNSNLERTFRELQTAMEKLRTEPQWVPVSWVY.

L27 domains are found at residues 8–60 and 84–142; these read SETA…FMQQ and LEAV…YETP. Position 42 is a phosphoserine (Ser-42). Residue Thr-141 is modified to Phosphothreonine. Ser-145 is modified (phosphoserine). The PDZ domain occupies 185–240; the sequence is ELVIARILHGGMVAQQGLLHVGDIIKEVNGQPVGSDPRALQELLRNASGSVILKIL. The SH3 domain occupies 249 to 317; sequence PRQVFVKCHF…PSQLLEEKRK (69 aa). In terms of domain architecture, Guanylate kinase-like spans 374–561; it reads RKTLVLIGAQ…TFRELQTAME (188 aa).

It belongs to the MAGUK family. As to quaternary structure, can homomultimerise. Interacts with CACNG2. Interacts (via the SH3-Guanylate kinase-like sub-module) with DLG4/PSD95 and DLGAP1/GKAP. Interacts (via the PDZ domain) with CADM1 (via C-terminus). Interacts with KCNN2/SK2 (via N-terminal domain). Interacts with SRC. Phosphorylated by SRC.

The protein resides in the cytoplasm. It is found in the cytoskeleton. Its subcellular location is the membrane. It localises to the cell projection. The protein localises to the dendrite. The protein resides in the postsynaptic density. Functionally, postsynaptic MAGUK scaffold protein that links CADM1 cell adhesion molecules to core components of the postsynaptic density. In CA1 pyramidal neurons, required for synaptic KCNN2-containing channel function and long-term potentiation expression. Seems to negatively regulate SRC function in epithelial cells. The polypeptide is MAGUK p55 subfamily member 2 (Homo sapiens (Human)).